We begin with the raw amino-acid sequence, 82 residues long: MKLTCVMIVAVLFLTTWTFVTADDSRYGLKNLFPKARHEMKNPEASKLNKRDGCSSGGTFCGIHPGLCCSEFCFLWCITFID.

Residues 1 to 22 (MKLTCVMIVAVLFLTTWTFVTA) form the signal peptide. A propeptide spanning residues 23-51 (DDSRYGLKNLFPKARHEMKNPEASKLNKR) is cleaved from the precursor. Cystine bridges form between Cys54–Cys69, Cys61–Cys73, and Cys68–Cys77. 4-hydroxyproline is present on Pro65.

This sequence belongs to the conotoxin O1 superfamily. As to expression, expressed by the venom duct.

It localises to the secreted. Delta-conotoxins bind to site 6 of voltage-gated sodium channels (Nav) and inhibit the inactivation process. Impairs rapid channel inactivation of Nav1.4/SCN4A (Kd=500 nM). Interacts with a conserved hydrophobic triad (YFV) in the domain-4 voltage sensor of sodium channels. In vivo, injection of both native or synthetic peptide induces twitching of back limbs, running in circles, and spastic paralysis. The sequence is that of Delta-conotoxin SVIE (SO6) from Conus striatus (Striated cone).